Here is a 136-residue protein sequence, read N- to C-terminus: Pterin-4-alpha-carbinolamine dehydratase 2 (136 aa).

An N6-acetyllysine; alternate mark is found at K120, K124, and K131. K120, K124, and K131 each carry N6-succinyllysine; alternate.

The protein belongs to the pterin-4-alpha-carbinolamine dehydratase family. Homotetramer. Interacts with DYRK1B.

The catalysed reaction is (4aS,6R)-4a-hydroxy-L-erythro-5,6,7,8-tetrahydrobiopterin = (6R)-L-erythro-6,7-dihydrobiopterin + H2O. Its function is as follows. Involved in tetrahydrobiopterin biosynthesis. Seems to both prevent the formation of 7-pterins and accelerate the formation of quinonoid-BH2. In terms of biological role, regulates the dimerization of homeodomain protein HNF-1-alpha and enhances its transcriptional activity. The sequence is that of Pterin-4-alpha-carbinolamine dehydratase 2 (Pcbd2) from Mus musculus (Mouse).